The primary structure comprises 279 residues: Four and a half LIM domains protein 2 (279 aa).

Residues 7–31 form a C4-type zinc finger; sequence CHHCNESLYGKKYILKEENPHCVAC. LIM zinc-binding domains follow at residues 40–92, 101–153, and 162–212; these read CEEC…CTDC, CQEC…CVPC, and CVQC…CLTC. Lys-78 is covalently cross-linked (Glycyl lysine isopeptide (Lys-Gly) (interchain with G-Cter in SUMO2)). Glycyl lysine isopeptide (Lys-Gly) (interchain with G-Cter in SUMO2) cross-links involve residues Lys-167 and Lys-220. The LIM zinc-binding 4 domain maps to 221-275; sequence CAGCTNPISGLGGTKYISFEERQWHNDCFNCKKCSLSLVGRGFLTERDDILCPDC. Residue Ser-238 is modified to Phosphoserine.

As to quaternary structure, interacts with ZNF638 and TTN/titin. Interacts with E4F1. Interacts with GRB7. Interacts with SIRT1 and FOXO1. Interacts with CEFIP and calcineurin. Interacts with FOXK1. Expressed in heart only (at protein level).

Its subcellular location is the cytoplasm. It localises to the nucleus. The protein localises to the myofibril. It is found in the sarcomere. The protein resides in the z line. Functionally, may function as a molecular transmitter linking various signaling pathways to transcriptional regulation. Negatively regulates the transcriptional repressor E4F1 and may function in cell growth. Inhibits the transcriptional activity of FOXO1 and its apoptotic function by enhancing the interaction of FOXO1 with SIRT1 and FOXO1 deacetylation. Negatively regulates the calcineurin/NFAT signaling pathway in cardiomyocytes. The protein is Four and a half LIM domains protein 2 (Fhl2) of Rattus norvegicus (Rat).